The chain runs to 306 residues: ATP synthase gamma chain (306 aa).

This sequence belongs to the ATPase gamma chain family. As to quaternary structure, F-type ATPases have 2 components, CF(1) - the catalytic core - and CF(0) - the membrane proton channel. CF(1) has five subunits: alpha(3), beta(3), gamma(1), delta(1), epsilon(1). CF(0) has three main subunits: a, b and c.

It is found in the cell membrane. Functionally, produces ATP from ADP in the presence of a proton gradient across the membrane. The gamma chain is believed to be important in regulating ATPase activity and the flow of protons through the CF(0) complex. This chain is ATP synthase gamma chain, found in Bifidobacterium animalis subsp. lactis (strain AD011).